The following is a 1521-amino-acid chain: Lysophospholipase NTE1 (1521 aa).

At 1–50 (MDVVNSTARAAVTSATAVTAVTGTGDRHPNPLSSAVAAASDVANAHGSSS) the chain is on the cytoplasmic side. Residues 51–71 (WLGLFARVVLWLLQFVSMVLY) form a helical membrane-spanning segment. The Lumenal portion of the chain corresponds to 72 to 96 (YAIKLATISVPTLLYTLFSTSLTVT). Residues 97–117 (MNATTLMLIVAAMIGAISWVV) form a helical membrane-spanning segment. Residues 118–1521 (RYRYLNMYSR…RTMAPRRASI (1404 aa)) are Cytoplasmic-facing. Disordered stretches follow at residues 280 to 301 (HADE…PNYP), 315 to 372 (SVPN…SAHP), and 738 to 768 (HAMD…KVDD). Polar residues-rich tracts occupy residues 316 to 334 (VPNT…NNLP) and 738 to 753 (HAMD…QRSP). Residues 670 to 789 (PASP…GGLA) and 837 to 957 (RLTN…IASR) contribute to the a nucleoside 3',5'-cyclic phosphate site. The PNPLA domain maps to 1217–1381 (LVLGGGGARG…VDNLTVSHMK (165 aa)). The GXGXXG motif lies at 1221 to 1226 (GGGARG). Residues 1248 to 1252 (GTSIG) carry the GXSXG motif. The Nucleophile role is filled by Ser-1250. Residue Asp-1368 is the Proton acceptor of the active site. Positions 1368-1370 (DGG) match the DGA/G motif.

It belongs to the NTE family.

It is found in the endoplasmic reticulum membrane. The enzyme catalyses a 1-acyl-sn-glycero-3-phosphocholine + H2O = sn-glycerol 3-phosphocholine + a fatty acid + H(+). With respect to regulation, inhibited by organophosphorus esters. Functionally, intracellular phospholipase B that catalyzes the double deacylation of phosphatidylcholine (PC) to glycerophosphocholine (GroPCho). Plays an important role in membrane lipid homeostasis. Responsible for the rapid PC turnover in response to inositol, elevated temperatures, or when choline is present in the growth medium. The polypeptide is Lysophospholipase NTE1 (NTE1) (Chaetomium globosum (strain ATCC 6205 / CBS 148.51 / DSM 1962 / NBRC 6347 / NRRL 1970) (Soil fungus)).